We begin with the raw amino-acid sequence, 390 residues long: 23S rRNA (uracil(747)-C(5))-methyltransferase RlmC (390 aa).

The [4Fe-4S] cluster site is built by Cys-12, Cys-20, Cys-23, and Cys-100. Positions 225, 254, 275, and 322 each coordinate S-adenosyl-L-methionine. Cys-349 acts as the Nucleophile in catalysis.

It belongs to the class I-like SAM-binding methyltransferase superfamily. RNA M5U methyltransferase family. RlmC subfamily.

It carries out the reaction uridine(747) in 23S rRNA + S-adenosyl-L-methionine = 5-methyluridine(747) in 23S rRNA + S-adenosyl-L-homocysteine + H(+). Catalyzes the formation of 5-methyl-uridine at position 747 (m5U747) in 23S rRNA. This is 23S rRNA (uracil(747)-C(5))-methyltransferase RlmC from Shewanella baltica (strain OS185).